The sequence spans 51 residues: Defensin-like protein 1 (51 aa).

Glutamine 1 carries the post-translational modification Pyrrolidone carboxylic acid. Cystine bridges form between cysteine 4-cysteine 51, cysteine 15-cysteine 36, cysteine 21-cysteine 45, and cysteine 25-cysteine 47.

In terms of assembly, forms oligomers in its native state.

Functionally, possesses antifungal activity sensitive to inorganic cations. This Sinapis alba (White mustard) protein is Defensin-like protein 1.